The primary structure comprises 358 residues: Methylthioribose-1-phosphate isomerase (358 aa).

Substrate-binding positions include 54–56, R96, and Q205; that span reads RGA. Catalysis depends on D246, which acts as the Proton donor. 256–257 contributes to the substrate binding site; sequence NK.

Belongs to the eIF-2B alpha/beta/delta subunits family. MtnA subfamily.

It carries out the reaction 5-(methylsulfanyl)-alpha-D-ribose 1-phosphate = 5-(methylsulfanyl)-D-ribulose 1-phosphate. It participates in amino-acid biosynthesis; L-methionine biosynthesis via salvage pathway; L-methionine from S-methyl-5-thio-alpha-D-ribose 1-phosphate: step 1/6. In terms of biological role, catalyzes the interconversion of methylthioribose-1-phosphate (MTR-1-P) into methylthioribulose-1-phosphate (MTRu-1-P). In Pseudomonas aeruginosa (strain UCBPP-PA14), this protein is Methylthioribose-1-phosphate isomerase.